A 293-amino-acid chain; its full sequence is Aromatic amino acid exporter YddG (293 aa).

The Cytoplasmic segment spans residues 1-6 (MTRQKA). One can recognise an EamA 1 domain in the interval 6 to 137 (ATLIGLIAIV…LALVGVCWVL (132 aa)). A helical transmembrane segment spans residues 7-27 (TLIGLIAIVLWSTMVGLIRGV). Residues 28–33 (SEGLGP) lie on the Periplasmic side of the membrane. The helical transmembrane segment at 34 to 54 (VGGAAAIYSLSGLLLIFTVGF) threads the bilayer. The Cytoplasmic segment spans residues 55–62 (PRIRQIPK). The chain crosses the membrane as a helical span at residues 63-83 (GYLLAGSLLFVSYEICLALSL). Residues 84-92 (GYAATHHQA) lie on the Periplasmic side of the membrane. A helical transmembrane segment spans residues 93–113 (IEVGMVNYLWPSLTILFAILF). The Cytoplasmic portion of the chain corresponds to 114–118 (NGQKT). The helical transmembrane segment at 119 to 139 (NWLIVPGLLLALVGVCWVLGG) threads the bilayer. At 140–155 (DNGLHYDEIINNITTS) the chain is on the periplasmic side. A helical membrane pass occupies residues 156-176 (PLSYFLAFIGAFIWAAYCTVT). In terms of domain architecture, EamA 2 spans 158 to 285 (SYFLAFIGAF…ALMVCGGSLL (128 aa)). Over 177–182 (NKYARG) the chain is Cytoplasmic. Residues 183 to 203 (FNGITVFVLLTGASLWVYYFL) form a helical membrane-spanning segment. Topologically, residues 204–218 (TPQPEMIFSTPVMIK) are periplasmic. Residues 219–239 (LISAAFTLGFAYAAWNVGILH) form a helical membrane-spanning segment. Over 240–243 (GNVT) the chain is Cytoplasmic. The helical transmembrane segment at 244 to 264 (IMAVGSYFTPVLSSALAAVLL) threads the bilayer. Topologically, residues 265 to 267 (SAP) are periplasmic. The chain crosses the membrane as a helical span at residues 268–288 (LSFSFWQGALMVCGGSLLCWL). Residues 289 to 293 (ATRRG) lie on the Cytoplasmic side of the membrane.

The protein belongs to the drug/metabolite transporter (DMT) superfamily. Aromatic amino acid/paraquat exporter (ArAA/P-E) (TC 2.A.7.17) family.

Its subcellular location is the cell inner membrane. The enzyme catalyses L-phenylalanine(in) = L-phenylalanine(out). It catalyses the reaction L-tyrosine(in) = L-tyrosine(out). It carries out the reaction L-tryptophan(in) = L-tryptophan(out). The catalysed reaction is L-threonine(in) = L-threonine(out). The enzyme catalyses L-methionine(in) = L-methionine(out). It catalyses the reaction L-lysine(in) = L-lysine(out). It carries out the reaction L-glutamate(out) = L-glutamate(in). The catalysed reaction is L-valine(in) = L-valine(out). The enzyme catalyses L-isoleucine(in) = L-isoleucine(out). In terms of biological role, amino acid transporter with broad substrate specificity. Can transport various amino acids, including phenylalanine, tyrosine, tryptophan, L-threonine, L-methionine, L-lysine, L-glutamate, L-valine and L-isoleucine. Overexpression confers resistance to phenylalanine and increases export of phenylalanine, tyrosine and tryptophan. This is Aromatic amino acid exporter YddG (yddG) from Escherichia coli (strain K12).